The following is a 794-amino-acid chain: Zinc finger Y-chromosomal protein 1 (794 aa).

The short motif at threonine 380–arginine 389 is the Nuclear localization signal element. 13 C2H2-type zinc fingers span residues tyrosine 411–histidine 433, tyrosine 442–histidine 464, leucine 477–histidine 499, histidine 508–histidine 531, histidine 537–histidine 559, tyrosine 565–histidine 588, phenylalanine 594–histidine 616, histidine 622–histidine 645, histidine 651–histidine 673, histidine 679–histidine 702, tyrosine 708–histidine 730, tyrosine 736–histidine 759, and histidine 765–histidine 788.

The protein belongs to the krueppel C2H2-type zinc-finger protein family. ZFX/ZFY subfamily.

The protein localises to the nucleus. Probable transcriptional activator. The protein is Zinc finger Y-chromosomal protein 1 (zfy1) of Xenopus laevis (African clawed frog).